Reading from the N-terminus, the 450-residue chain is Divalent metal cation transporter MntH (450 aa).

11 consecutive transmembrane segments (helical) span residues Leu-34 to Ile-54, Gly-59 to Leu-81, Ile-108 to Val-128, Ile-141 to Met-161, Ala-170 to Ser-190, Gly-212 to Leu-232, Ile-263 to Phe-283, Pro-305 to Ala-325, Ser-361 to Ile-381, Gln-383 to Leu-403, and Val-422 to Val-442.

The protein belongs to the NRAMP family.

Its subcellular location is the cell membrane. H(+)-stimulated, divalent metal cation uptake system. This chain is Divalent metal cation transporter MntH, found in Staphylococcus aureus (strain MRSA252).